The chain runs to 75 residues: Sec-independent protein translocase protein TatA (75 aa).

A helical membrane pass occupies residues M1–G21. The segment at D47–A75 is disordered. Residues K53–A75 show a composition bias toward basic and acidic residues.

The protein belongs to the TatA/E family. As to quaternary structure, the Tat system comprises two distinct complexes: a TatABC complex, containing multiple copies of TatA, TatB and TatC subunits, and a separate TatA complex, containing only TatA subunits. Substrates initially bind to the TatABC complex, which probably triggers association of the separate TatA complex to form the active translocon.

The protein localises to the cell inner membrane. Functionally, part of the twin-arginine translocation (Tat) system that transports large folded proteins containing a characteristic twin-arginine motif in their signal peptide across membranes. TatA could form the protein-conducting channel of the Tat system. This chain is Sec-independent protein translocase protein TatA, found in Sulfurovum sp. (strain NBC37-1).